The primary structure comprises 305 residues: Uracil-DNA glycosylase (305 aa).

Aspartate 148 serves as the catalytic Proton acceptor.

It belongs to the uracil-DNA glycosylase (UDG) superfamily. UNG family.

It localises to the host nucleus. It catalyses the reaction Hydrolyzes single-stranded DNA or mismatched double-stranded DNA and polynucleotides, releasing free uracil.. Its function is as follows. Excises uracil residues from the DNA which can arise as a result of misincorporation of dUMP residues by DNA polymerase or deamination of cytosines. Therefore may reduce deleterious uracil incorporation into the viral genome, particularly in terminally differentiated cells which lack DNA repair enzymes. The protein is Uracil-DNA glycosylase of Varicella-zoster virus (strain Dumas) (HHV-3).